Here is a 992-residue protein sequence, read N- to C-terminus: Disks large-associated protein 1 (992 aa).

Disordered stretches follow at residues 154–209 and 355–375; these read SLEG…SWWS and KAMGDEDSGDSDTSPKPSPKV. Ser169 is modified (phosphoserine). Residues 195-209 show a composition bias toward low complexity; the sequence is SNASNASPTSPSWWS. Residues Ser362, Ser365, Ser368, Ser372, Ser389, Ser418, Ser421, Ser425, Ser428, Ser437, Ser509, Ser516, and Ser578 each carry the phosphoserine modification. Thr579 is modified (phosphothreonine). 2 positions are modified to phosphoserine: Ser581 and Ser605. Thr606 bears the Phosphothreonine mark. A phosphoserine mark is found at Ser608 and Ser611. 2 interaction with DYL2 regions span residues 665-676 and 687-698; these read LSIGIQVDDAEE and SKFQSVGVQVEE. Residues 914–980 form a disordered region; sequence WKQMDPLDKK…QNSATESAES (67 aa). Basic and acidic residues-rich tracts occupy residues 918–927 and 943–958; these read DPLDKKERRA and IRERSLESSQRQEARK. Ser947 carries the phosphoserine modification. Over residues 969-978 the composition is skewed to polar residues; the sequence is VRQNSATESA. The PDZ-binding signature appears at 990–992; the sequence is TRL.

Belongs to the SAPAP family. In terms of assembly, interacts with guanylate kinase-like domain of DLG1, DLG2, DLG3, DLG4 and AIP1. Interacts with the PDZ domain of SHANK1, SHANK2 and SHANK3. Found in a complex with DLG4 and SHANK1, SHANK2 or SHANK3. Found in a complex with DLG4 and BEGAIN. Interacts with DYL2 and LRFN1. Interacts with MPP2 (via the SH3-Guanylate kinase-like sub-module). Post-translationally, ubiquitinated by TRIM3; leading to proteasomal degradation. As to expression, expressed in brain and testis.

It is found in the cell membrane. The protein resides in the postsynaptic density. The protein localises to the synapse. Functionally, part of the postsynaptic scaffold in neuronal cells. This chain is Disks large-associated protein 1, found in Rattus norvegicus (Rat).